The following is a 449-amino-acid chain: Tubulin beta-5 chain (449 aa).

The GTP site is built by Gln-11, Glu-70, Ser-139, Gly-143, Thr-144, Gly-145, Asn-205, and Asn-227. Glu-70 contributes to the Mg(2+) binding site. The tract at residues 427-449 is disordered; that stretch reads QDATADEEGEYDVEEEEEGDYET. Residues 430 to 449 are compositionally biased toward acidic residues; that stretch reads TADEEGEYDVEEEEEGDYET.

It belongs to the tubulin family. As to quaternary structure, dimer of alpha and beta chains. A typical microtubule is a hollow water-filled tube with an outer diameter of 25 nm and an inner diameter of 15 nM. Alpha-beta heterodimers associate head-to-tail to form protofilaments running lengthwise along the microtubule wall with the beta-tubulin subunit facing the microtubule plus end conferring a structural polarity. Microtubules usually have 13 protofilaments but different protofilament numbers can be found in some organisms and specialized cells. It depends on Mg(2+) as a cofactor.

The protein localises to the cytoplasm. The protein resides in the cytoskeleton. Its function is as follows. Tubulin is the major constituent of microtubules, a cylinder consisting of laterally associated linear protofilaments composed of alpha- and beta-tubulin heterodimers. Microtubules grow by the addition of GTP-tubulin dimers to the microtubule end, where a stabilizing cap forms. Below the cap, tubulin dimers are in GDP-bound state, owing to GTPase activity of alpha-tubulin. This Arabidopsis thaliana (Mouse-ear cress) protein is Tubulin beta-5 chain (TUBB5).